The sequence spans 560 residues: Arginine--tRNA ligase (560 aa).

A 'HIGH' region motif is present at residues 122 to 132 (ANPNGPLHIGH).

The protein belongs to the class-I aminoacyl-tRNA synthetase family.

The protein localises to the cytoplasm. It carries out the reaction tRNA(Arg) + L-arginine + ATP = L-arginyl-tRNA(Arg) + AMP + diphosphate. The sequence is that of Arginine--tRNA ligase (argS) from Methanothermobacter thermautotrophicus (strain ATCC 29096 / DSM 1053 / JCM 10044 / NBRC 100330 / Delta H) (Methanobacterium thermoautotrophicum).